Consider the following 349-residue polypeptide: Aspartate-semialdehyde dehydrogenase (349 aa).

NADP(+)-binding positions include 12-15 (TGSV) and 39-40 (NS). Phosphate is bound at residue Arg-113. The Acyl-thioester intermediate role is filled by Cys-148. Residue Gln-175 participates in substrate binding. Residue 178-179 (SG) participates in NADP(+) binding. Glu-201 serves as a coordination point for substrate. Lys-204 is a binding site for phosphate. Substrate is bound at residue Arg-234. His-241 acts as the Proton acceptor in catalysis. 326-327 (NT) serves as a coordination point for NADP(+).

It belongs to the aspartate-semialdehyde dehydrogenase family. Homodimer.

It catalyses the reaction L-aspartate 4-semialdehyde + phosphate + NADP(+) = 4-phospho-L-aspartate + NADPH + H(+). The protein operates within amino-acid biosynthesis; L-lysine biosynthesis via DAP pathway; (S)-tetrahydrodipicolinate from L-aspartate: step 2/4. Its pathway is amino-acid biosynthesis; L-methionine biosynthesis via de novo pathway; L-homoserine from L-aspartate: step 2/3. It functions in the pathway amino-acid biosynthesis; L-threonine biosynthesis; L-threonine from L-aspartate: step 2/5. Functionally, catalyzes the NADPH-dependent formation of L-aspartate-semialdehyde (L-ASA) by the reductive dephosphorylation of L-aspartyl-4-phosphate. The protein is Aspartate-semialdehyde dehydrogenase of Leptospira interrogans serogroup Icterohaemorrhagiae serovar Lai (strain 56601).